The primary structure comprises 328 residues: Organic solute transporter alpha-like protein (328 aa).

The Extracellular portion of the chain corresponds to 1 to 44 (MNASENYFTMDPTENISQVLDQNRNNTNSLRTHPTVEEYYENMT). Residues asparagine 2, asparagine 15, asparagine 25, and asparagine 42 are each glycosylated (N-linked (GlcNAc...) asparagine). The chain crosses the membrane as a helical span at residues 45-65 (AFLSLAIFIASLLTILNISIF). Residues 66–84 (ATTVSRLRRHLDKPLLGPS) are Cytoplasmic-facing. The helical transmembrane segment at 85-105 (IMMVGLYPIISVAALVTILVP) threads the bilayer. Tyrosine 106 is a topological domain (extracellular). The helical transmembrane segment at 107-127 (SWFICHTVMHVMFMVGGPVFR) threads the bilayer. The Cytoplasmic segment spans residues 128 to 177 (TLLFRYVGSEQNYVKETAGEAVQLNTPPCCCCCLCLPMVIPTKAKLCISR). Residues 178 to 198 (YMVWQMPFWQGSIMLVMNILY) form a helical membrane-spanning segment. Over 199–208 (YRDIQLYRQV) the chain is Extracellular. The chain crosses the membrane as a helical span at residues 209-229 (MFFFIPFIVCSIVLGAWSLQI). Residues 230-247 (TVRMITKVRGDYQLRKKM) lie on the Cytoplasmic side of the membrane. The chain crosses the membrane as a helical span at residues 248–265 (FCLQLVVMLCKLQYLVLY). Topologically, residues 266-287 (DQLDGIKMGGEYPINHTVYKQT) are extracellular. Asparagine 280 carries an N-linked (GlcNAc...) asparagine glycan. The helical transmembrane segment at 288 to 308 (IINILILVEMVLVSMMVQSAY) threads the bilayer. Residues 309-328 (RTPVQVQIDEVNKEKEVTRI) are Cytoplasmic-facing.

Belongs to the OST-alpha family.

It is found in the cell membrane. Its function is as follows. Probable transporter. This is Organic solute transporter alpha-like protein from Drosophila melanogaster (Fruit fly).